The chain runs to 176 residues: Urease accessory protein UreE (176 aa).

This sequence belongs to the UreE family.

It is found in the cytoplasm. Functionally, involved in urease metallocenter assembly. Binds nickel. Probably functions as a nickel donor during metallocenter assembly. This chain is Urease accessory protein UreE, found in Helicobacter bizzozeronii.